The following is a 282-amino-acid chain: Acyl-CoA-binding domain-containing protein 6 (282 aa).

The interval 1–34 (MATPFLPAGATTGDSGGELSSGDDSGDLESFQTP) is disordered. S41 carries the phosphoserine modification. An ACB domain is found at 42–127 (LAELFEKAAA…VKKLDPGWNP (86 aa)). Residues 69–73 (YARYK) and K95 each bind an acyl-CoA. S106 carries the post-translational modification Phosphoserine. Y114 serves as a coordination point for an acyl-CoA. ANK repeat units follow at residues 191 to 220 (EGRA…GINC) and 224 to 253 (EGQT…DPTL).

In terms of assembly, monomer.

The protein resides in the cytoplasm. The protein localises to the nucleus. Its function is as follows. Binds long-chain acyl-coenzyme A molecules with a strong preference for unsaturated C18:1-CoA, lower affinity for unsaturated C20:4-CoA, and very weak affinity for saturated C16:0-CoA. Does not bind fatty acids. Plays a role in protein N-myristoylation. This is Acyl-CoA-binding domain-containing protein 6 (Acbd6) from Rattus norvegicus (Rat).